The sequence spans 200 residues: Peptidyl-tRNA hydrolase (200 aa).

Residue Tyr-15 coordinates tRNA. The active-site Proton acceptor is the His-20. Positions 66, 68, and 114 each coordinate tRNA.

The protein belongs to the PTH family. In terms of assembly, monomer.

The protein resides in the cytoplasm. It carries out the reaction an N-acyl-L-alpha-aminoacyl-tRNA + H2O = an N-acyl-L-amino acid + a tRNA + H(+). Hydrolyzes ribosome-free peptidyl-tRNAs (with 1 or more amino acids incorporated), which drop off the ribosome during protein synthesis, or as a result of ribosome stalling. In terms of biological role, catalyzes the release of premature peptidyl moieties from peptidyl-tRNA molecules trapped in stalled 50S ribosomal subunits, and thus maintains levels of free tRNAs and 50S ribosomes. The polypeptide is Peptidyl-tRNA hydrolase (Paraburkholderia phymatum (strain DSM 17167 / CIP 108236 / LMG 21445 / STM815) (Burkholderia phymatum)).